Reading from the N-terminus, the 772-residue chain is MLTSWGKTGFVLALALGGRAAENVITSDTFFYGESPPVYPSPEGTGAGDWASAYTKARAFVAQLSDDEKIQLTAGVSSNTACSGFIQPIDRLGFPGICMSDAGNGLRGTDYVNGWSSGISVGASWNRDLAHSRGAYMGQEYRKKGVNMILGPVVGPLGRVALGGRNWEGYAADPYLSGVLVSESVKGLQSQKVATSVKHFIANEQETNRNPTTDSERNVVQSVSSNIDDKTMHELYLWPFQDAVLAGATNLMCSYNRVNNSYACQNSKLLNGVLKTELGFQGYVVTDWGAQHAGIASANAGLDVVMPRSSTWNSNLTTAIANGTMEASRLDDMITRLMATWYYLDQDTEFPSPGVGMPSSPSAAHQAVIATSPEAKPILLQSAIESHVLVKNTDGALPLKSPKLISVFGYDAYAPLTYDLGNNFDFSSTRVRSDLYKNGTLYVGGGSGLNSPAYIDAPIDAIKRRAYEDGSSVLWDFTSENPSVDYTSDVCLVFINAYATEGYDRQALSDTHSDSVVENIAGNCSNTIVVVHNAGIRTAEAWVDHANVTAIIYAHLPGQDIGRALVRLLYGESNFSGRLPYTVAKNSSDYGSLLEPSQPEGKYQYFPQSDFSEGVYIDYRAFDKDGIVPQYAFGYGLSYTTFEYSDLKISKNSDGVPSIYPAKASILPGGNPHLFDELVTVTAKIRNTGNVDGQEVAQLYVGIPDGPVRQLRGFDKVLIESGSSATVTFSLTRRDLSTWDANAQEWSLQRGTYKIFVGRDSRDLPLEETLVF.

The first 20 residues, 1-20 (MLTSWGKTGFVLALALGGRA), serve as a signal peptide directing secretion. An N-linked (GlcNAc...) asparagine glycan is attached at Asn-259. Asp-287 is a catalytic residue. N-linked (GlcNAc...) asparagine glycosylation is found at Asn-315, Asn-322, Asn-438, Asn-523, Asn-547, Asn-574, and Asn-586.

It belongs to the glycosyl hydrolase 3 family.

The protein localises to the secreted. The catalysed reaction is Hydrolysis of terminal, non-reducing beta-D-glucosyl residues with release of beta-D-glucose.. Its pathway is glycan metabolism; cellulose degradation. Beta-glucosidases are one of a number of cellulolytic enzymes involved in the degradation of cellulosic biomass. Catalyzes the last step releasing glucose from the inhibitory cellobiose. In Emericella nidulans (strain FGSC A4 / ATCC 38163 / CBS 112.46 / NRRL 194 / M139) (Aspergillus nidulans), this protein is Probable beta-glucosidase M (bglM).